Here is a 517-residue protein sequence, read N- to C-terminus: Serine hydroxymethyltransferase 1, mitochondrial (517 aa).

The transit peptide at 1-31 directs the protein to the mitochondrion; that stretch reads MAMALALRRLSSSADKPLQRLFNGGHLYSMS. Position 287 is an N6-(pyridoxal phosphate)lysine (Lys287).

The protein belongs to the SHMT family. In terms of assembly, homotetramer. It depends on pyridoxal 5'-phosphate as a cofactor.

The protein localises to the mitochondrion. It catalyses the reaction (6R)-5,10-methylene-5,6,7,8-tetrahydrofolate + glycine + H2O = (6S)-5,6,7,8-tetrahydrofolate + L-serine. The protein operates within one-carbon metabolism; tetrahydrofolate interconversion. Functionally, catalyzes the interconversion of serine and glycine. The sequence is that of Serine hydroxymethyltransferase 1, mitochondrial from Flaveria pringlei.